Consider the following 206-residue polypeptide: Large ribosomal subunit protein uL4 (206 aa).

It belongs to the universal ribosomal protein uL4 family. As to quaternary structure, part of the 50S ribosomal subunit.

One of the primary rRNA binding proteins, this protein initially binds near the 5'-end of the 23S rRNA. It is important during the early stages of 50S assembly. It makes multiple contacts with different domains of the 23S rRNA in the assembled 50S subunit and ribosome. Its function is as follows. Forms part of the polypeptide exit tunnel. In Methylorubrum extorquens (strain CM4 / NCIMB 13688) (Methylobacterium extorquens), this protein is Large ribosomal subunit protein uL4.